Consider the following 485-residue polypeptide: Rhamnulokinase (485 aa).

8–12 (ASSGR) is an ATP binding site. Substrate contacts are provided by residues glycine 78 and 231–233 (HDT). The active-site Proton acceptor is aspartate 232. Threonine 254 is a binding site for ATP. Asparagine 291 lines the substrate pocket. Residue glutamine 299 participates in ATP binding. An intrachain disulfide couples cysteine 348 to cysteine 365. An ATP-binding site is contributed by glycine 397. Cysteine 408 and cysteine 412 form a disulfide bridge.

Belongs to the rhamnulokinase family. Mg(2+) is required as a cofactor.

It catalyses the reaction L-rhamnulose + ATP = L-rhamnulose 1-phosphate + ADP + H(+). It participates in carbohydrate degradation; L-rhamnose degradation; glycerone phosphate from L-rhamnose: step 2/3. Its function is as follows. Involved in the catabolism of L-rhamnose (6-deoxy-L-mannose). Catalyzes the transfer of the gamma-phosphate group from ATP to the 1-hydroxyl group of L-rhamnulose to yield L-rhamnulose 1-phosphate. This is Rhamnulokinase from Yersinia pestis bv. Antiqua (strain Angola).